Here is a 72-residue protein sequence, read N- to C-terminus: Large ribosomal subunit protein bL31 (72 aa).

Positions 16, 18, 36, and 39 each coordinate Zn(2+).

It belongs to the bacterial ribosomal protein bL31 family. Type A subfamily. Part of the 50S ribosomal subunit. Zn(2+) is required as a cofactor.

In terms of biological role, binds the 23S rRNA. In Geobacter sp. (strain M21), this protein is Large ribosomal subunit protein bL31.